Reading from the N-terminus, the 282-residue chain is Adenosylcobinamide-GDP ribazoletransferase (282 aa).

A run of 6 helical transmembrane segments spans residues 47-67 (GVGI…QALL), 72-92 (FTPL…TGGF), 124-144 (AFGA…LAML), 167-187 (AALL…IWLL), 208-228 (GSLL…GLAL), and 231-251 (ISLI…GALF).

The protein belongs to the CobS family. It depends on Mg(2+) as a cofactor.

The protein localises to the cell inner membrane. It carries out the reaction alpha-ribazole + adenosylcob(III)inamide-GDP = adenosylcob(III)alamin + GMP + H(+). It catalyses the reaction alpha-ribazole 5'-phosphate + adenosylcob(III)inamide-GDP = adenosylcob(III)alamin 5'-phosphate + GMP + H(+). The protein operates within cofactor biosynthesis; adenosylcobalamin biosynthesis; adenosylcobalamin from cob(II)yrinate a,c-diamide: step 7/7. Joins adenosylcobinamide-GDP and alpha-ribazole to generate adenosylcobalamin (Ado-cobalamin). Also synthesizes adenosylcobalamin 5'-phosphate from adenosylcobinamide-GDP and alpha-ribazole 5'-phosphate. The chain is Adenosylcobinamide-GDP ribazoletransferase from Polaromonas sp. (strain JS666 / ATCC BAA-500).